The chain runs to 99 residues: ATP-dependent Clp protease adapter protein ClpS (99 aa).

The protein belongs to the ClpS family. As to quaternary structure, binds to the N-terminal domain of the chaperone ClpA.

Functionally, involved in the modulation of the specificity of the ClpAP-mediated ATP-dependent protein degradation. The chain is ATP-dependent Clp protease adapter protein ClpS from Acetivibrio thermocellus (strain ATCC 27405 / DSM 1237 / JCM 9322 / NBRC 103400 / NCIMB 10682 / NRRL B-4536 / VPI 7372) (Clostridium thermocellum).